The primary structure comprises 178 residues: Killin (178 aa).

Residues 8 to 50 mediate DNA binding; it reads SARPGRTVHVWGYRVEWKVRNGRKLQPSEWAGRGDLGGFKRRW.

The protein resides in the nucleus. DNA-binding protein involved in S phase checkpoint control-coupled apoptosis by mediating p53/TP53-induced apoptosis. Has the ability to inhibit DNA synthesis and S phase arrest coupled to apoptosis. Has affinity to both double- and single-stranded DNA. This is Killin (KLLN) from Homo sapiens (Human).